A 264-amino-acid chain; its full sequence is uncharacterized protein (264 aa).

A helical transmembrane segment spans residues 7-27; sequence LTLGICLVLLIILIVGYVIMT.

The protein belongs to the staphylococcal tandem lipoprotein family.

Its subcellular location is the cell membrane. This is an uncharacterized protein from Staphylococcus aureus (strain MRSA252).